Reading from the N-terminus, the 285-residue chain is MIINNNISAINAQRTLKFRNVDLSKDMAALSSGMRINRAGDDASGLAVSEKMRTQIRGLRQAERNNSSGISFIQTTEGYLQESQDILQRIRELAVQSANGIYTDADRMLIQVEVSQLVDEVNRIASHAQFNTLNMLTGRFSNPNEGGAPVASMWFHIGANMDERRRVYIGTMTAAALGLQTAEGTGISISSIDKANSAIGIVDEALTKVSKQRSNLPAYQNRLELTAQGLMIAYENTAASESRIRDTDMAETSVKFAKDQILSQANLAMLAQANTMNQGALRLIQ.

This sequence belongs to the bacterial flagellin family. The flagellum consists of an outer layer composed of two sheath proteins, flaA1 (44 kDa) and flaA2 (35 kDa) around a core that contains three proteins flaB1 (37 kDa), flaB2 (34 kDa) and flaB3 (32 kDa).

The protein resides in the periplasmic flagellum. The protein localises to the periplasm. Functionally, component of the core of the flagella. This Brachyspira hyodysenteriae (Treponema hyodysenteriae) protein is Flagellar filament core protein flaB2 (flaB2).